The sequence spans 232 residues: tRNA (guanine-N(1)-)-methyltransferase (232 aa).

S-adenosyl-L-methionine-binding positions include G111 and I131–L136.

Belongs to the RNA methyltransferase TrmD family. As to quaternary structure, homodimer.

It is found in the cytoplasm. The enzyme catalyses guanosine(37) in tRNA + S-adenosyl-L-methionine = N(1)-methylguanosine(37) in tRNA + S-adenosyl-L-homocysteine + H(+). In terms of biological role, specifically methylates guanosine-37 in various tRNAs. This Bartonella henselae (strain ATCC 49882 / DSM 28221 / CCUG 30454 / Houston 1) (Rochalimaea henselae) protein is tRNA (guanine-N(1)-)-methyltransferase.